A 106-amino-acid polypeptide reads, in one-letter code: uncharacterized protein (106 aa).

2 disordered regions span residues 27-47 and 83-106; these read FSDS…DVSD and SPAM…VQSK. The span at 29 to 39 shows a compositional bias: acidic residues; the sequence is DSEDEPDDEAS. Over residues 94-106 the composition is skewed to basic and acidic residues; sequence GIEREDRGGVQSK.

Its subcellular location is the mitochondrion. This is an uncharacterized protein from Arabidopsis thaliana (Mouse-ear cress).